We begin with the raw amino-acid sequence, 285 residues long: Small ribosomal subunit protein uS2 (285 aa).

Residues 262–285 (NDDWNEDDTAPAAPGAASWGGAAF) are disordered. Low complexity predominate over residues 271 to 285 (APAAPGAASWGGAAF).

Belongs to the universal ribosomal protein uS2 family. As to quaternary structure, component of the small ribosomal subunit. Mature ribosomes consist of a small (40S) and a large (60S) subunit. The 40S subunit contains about 33 different proteins and 1 molecule of RNA (18S). The 60S subunit contains about 49 different proteins and 3 molecules of RNA (28S, 5.8S and 5S). Interacts with ribosomal protein S21.

The protein resides in the cytoplasm. Functionally, required for the assembly and/or stability of the 40S ribosomal subunit. Required for the processing of the 20S rRNA-precursor to mature 18S rRNA in a late step of the maturation of 40S ribosomal subunits. This chain is Small ribosomal subunit protein uS2, found in Anopheles gambiae (African malaria mosquito).